The chain runs to 636 residues: Threonine--tRNA ligase (636 aa).

The 63-residue stretch at 1-63 folds into the TGS domain; it reads MINITTSFPN…SKDGSVDPVT (63 aa). The tract at residues 244-535 is catalytic; the sequence is DHRKIAKDLG…LIEHYAGNIP (292 aa). Positions 335, 386, and 512 each coordinate Zn(2+).

The protein belongs to the class-II aminoacyl-tRNA synthetase family. As to quaternary structure, homodimer. Requires Zn(2+) as cofactor.

The protein resides in the cytoplasm. The enzyme catalyses tRNA(Thr) + L-threonine + ATP = L-threonyl-tRNA(Thr) + AMP + diphosphate + H(+). In terms of biological role, catalyzes the attachment of threonine to tRNA(Thr) in a two-step reaction: L-threonine is first activated by ATP to form Thr-AMP and then transferred to the acceptor end of tRNA(Thr). Also edits incorrectly charged L-seryl-tRNA(Thr). The sequence is that of Threonine--tRNA ligase from Anaplasma marginale (strain Florida).